We begin with the raw amino-acid sequence, 444 residues long: Adenylosuccinate synthetase (444 aa).

Residues 19–25 and 47–49 each bind GTP; these read GDEGKGK and GHT. D20 (proton acceptor) is an active-site residue. Mg(2+) is bound by residues D20 and G47. IMP contacts are provided by residues 20–23, 45–48, T139, R153, Q234, T249, and R317; these read DEGK and NAGH. The active-site Proton donor is the H48. 313 to 319 is a substrate binding site; sequence TVTGRPR. GTP is bound by residues R319, 345 to 347, and 427 to 429; these read KLD and STG.

It belongs to the adenylosuccinate synthetase family. In terms of assembly, homodimer. It depends on Mg(2+) as a cofactor.

Its subcellular location is the cytoplasm. The catalysed reaction is IMP + L-aspartate + GTP = N(6)-(1,2-dicarboxyethyl)-AMP + GDP + phosphate + 2 H(+). Its pathway is purine metabolism; AMP biosynthesis via de novo pathway; AMP from IMP: step 1/2. Its function is as follows. Plays an important role in the de novo pathway of purine nucleotide biosynthesis. Catalyzes the first committed step in the biosynthesis of AMP from IMP. In Methylibium petroleiphilum (strain ATCC BAA-1232 / LMG 22953 / PM1), this protein is Adenylosuccinate synthetase.